Here is a 503-residue protein sequence, read N- to C-terminus: Probable cytosol aminopeptidase (503 aa).

Mn(2+) contacts are provided by Lys-274 and Asp-279. Residue Lys-286 is part of the active site. Mn(2+) is bound by residues Asp-297, Asp-356, and Glu-358. Arg-360 is a catalytic residue.

Belongs to the peptidase M17 family. Requires Mn(2+) as cofactor.

The protein localises to the cytoplasm. The enzyme catalyses Release of an N-terminal amino acid, Xaa-|-Yaa-, in which Xaa is preferably Leu, but may be other amino acids including Pro although not Arg or Lys, and Yaa may be Pro. Amino acid amides and methyl esters are also readily hydrolyzed, but rates on arylamides are exceedingly low.. The catalysed reaction is Release of an N-terminal amino acid, preferentially leucine, but not glutamic or aspartic acids.. In terms of biological role, presumably involved in the processing and regular turnover of intracellular proteins. Catalyzes the removal of unsubstituted N-terminal amino acids from various peptides. This chain is Probable cytosol aminopeptidase, found in Burkholderia ambifaria (strain MC40-6).